Consider the following 501-residue polypeptide: MAAAALLLLAAAAAAVVVAMALRWLLLLGGPAAGRQGKRARMPPGSTGLPLIGETLRLISAYKTPNPEPFIDERVARHGGVFTTHVFGERTVFSADPAFNRLLLAAEGRAVHSSYPSSIATLLGARSLLLTRGAAHKRLHSLTLTRLGRPASPPLLAHIDRLVLATMRQWEPAATVRLMDEAKKITFNLTVKQLVSIEPGPWTESLRREYVKLIDGFFSIPFPLACLLPFTTYGQALKARKKVAGALREVIKKRMEEKAENGGSIGDDEGKKEKKDMVEELLQAEGGSFSEEEMVDFCLSLLVAGYETTSVLMTLAVKFLTETPAALAELKEEHANIRDMKGKNQPLEWSDYKSMPFTQCVINETLRVGNIISGVFRRANTDIHYKDYTIPKGCKIFASFRAVHLNNEHYENARTFNPWRWQINNKLQNAVGANIFTPFGGGPRLCPGYELARVVVSIFLHHLVTRFSWEETEEDRLVFFPTTRTLKGYPINLRLLSESIC.

The helical transmembrane segment at 2-22 (AAAALLLLAAAAAAVVVAMAL) threads the bilayer. Residue Cys446 participates in heme binding.

This sequence belongs to the cytochrome P450 family. Heme serves as cofactor.

It is found in the membrane. Its pathway is plant hormone biosynthesis; brassinosteroid biosynthesis. Functionally, catalyzes the C23-alpha-hydroxylation step in brassinosteroid biosynthesis. Converts 6-deoxocathasterone to 6-deoxoteasterone in the late C6-oxidation pathway and cathasterone to teasterone (TE) in the early C6-oxidation pathway of brassinolide (BL) biosynthesis. The polypeptide is Cytochrome P450 90A4 (Oryza sativa subsp. indica (Rice)).